Here is a 527-residue protein sequence, read N- to C-terminus: tRNA pseudouridine synthase Pus10 (527 aa).

Positions 21 and 24 each coordinate Zn(2+). Residues 42–87 are a coiled coil; the sequence is KELLNELQKFLEPEKPELILEAPNPPLKKIRLHEDGIDNLSEDGKE. The residue at position 82 (S82) is a Phosphoserine. Zn(2+)-binding residues include C107 and C110. Residues 302–315 form an RNA binding forefinger loop region; that stretch reads TPWIIDGERKMESS. The active-site Nucleophile is the D342. Positions 440-455 are RNA binding thumb loop; the sequence is QKTPLRVLHRRPLAVR.

Belongs to the pseudouridine synthase Pus10 family. As to quaternary structure, interacts with components of the microprocessor complex DROSHA and DGCR8. Proteolytically cleaved during TRAIL-induced cell death. Cleaved, in vitro, either by caspase-3 (CASP3) or caspase-8 (CASP8).

It localises to the nucleus. Its subcellular location is the cytoplasm. The protein resides in the mitochondrion. It carries out the reaction uridine(55) in tRNA = pseudouridine(55) in tRNA. It catalyses the reaction uridine(54) in tRNA = pseudouridine(54) in tRNA. Functionally, protein with different functions depending on its subcellular location: involved in miRNA processing in the nucleus and acts as a tRNA pseudouridylate synthase in the cytoplasm. In the cytoplasm, acts as a pseudouridylate synthase by catalyzing synthesis of pseudouridine(54) and pseudouridine(55) from uracil-54 and uracil-55, respectively, in the psi GC loop of a subset of tRNAs. tRNA pseudouridylate synthase activity is enhanced by the presence of 1-methyladenosine at position 53-61 of tRNAs. Does not show tRNA pseudouridylate synthase activity in the nucleus. In the nucleus, promotes primary microRNAs (pri-miRNAs) processing independently of its RNA pseudouridylate synthase activity. Binds pri-miRNAs. Modulator of TRAIL/TNFSF10-induced cell death via activation of procaspase-8 and BID cleavage. Required for the progression of the apoptotic signal through intrinsic mitochondrial cell death. The chain is tRNA pseudouridine synthase Pus10 from Mus musculus (Mouse).